The sequence spans 441 residues: 2-oxoisovalerate dehydrogenase subunit alpha, mitochondrial (441 aa).

The transit peptide at 1-17 (MISQSYRILSRISRNNE) directs the protein to the mitochondrion. A thiamine diphosphate-binding site is contributed by 145-147 (QYR). 3 residues coordinate K(+): S194, T199, and Q200.

The protein belongs to the BCKDHA family. In terms of assembly, heterotetramer of alpha and beta chains. Thiamine diphosphate is required as a cofactor.

The protein localises to the mitochondrion matrix. It catalyses the reaction N(6)-[(R)-lipoyl]-L-lysyl-[protein] + 3-methyl-2-oxobutanoate + H(+) = N(6)-[(R)-S(8)-2-methylpropanoyldihydrolipoyl]-L-lysyl-[protein] + CO2. The branched-chain alpha-keto dehydrogenase complex catalyzes the overall conversion of alpha-keto acids to acyl-CoA and CO(2). It contains multiple copies of three enzymatic components: branched-chain alpha-keto acid decarboxylase (E1), lipoamide acyltransferase (E2) and lipoamide dehydrogenase (E3). The sequence is that of 2-oxoisovalerate dehydrogenase subunit alpha, mitochondrial (bkdA) from Dictyostelium discoideum (Social amoeba).